Here is a 460-residue protein sequence, read N- to C-terminus: Sorting nexin-4 (460 aa).

The span at 1-16 shows a compositional bias: polar residues; the sequence is MTATEQQQDDFSNVSW. Residues 1-53 are disordered; the sequence is MTATEQQQDDFSNVSWSEHVHDQQTRSVPDAEEPGHDMNAPGTGLERDAPSLG. The PX domain maps to 56 to 178; sequence KLECTVDTPI…TFLESPDWNA (123 aa). Coiled coils occupy residues 238–266, 306–337, and 374–403; these read EKVIARVARREADLEVDLRDLAEQFQKLI, RDMQAYSIALKNLLKAREQKQLDYEQLTEYLN, and QARRERTRKLELRVEELTHEVESARKTSDM.

It belongs to the sorting nexin family. Forms a complex with ATG20 and ATG17.

It localises to the cytoplasm. The protein resides in the membrane. Its subcellular location is the endosome membrane. Sorting nexin involved in the separation or division of vacuoles throughout the entire life cycle of the cells. Involved in retrieval of late-Golgi SNAREs from post-Golgi endosomes to the trans-Golgi network, for cytoplasm to vacuole transport (Cvt), and autophagy of large cargos including mitophagy, pexophagy and glycophagy. Autophagy is required for proper vegetative growth, asexual/sexual reproduction, and full virulence. Autophagy is particularly involved in the biosynthesis of deoxynivalenol (DON), an important virulence determinant. The sequence is that of Sorting nexin-4 from Gibberella zeae (strain ATCC MYA-4620 / CBS 123657 / FGSC 9075 / NRRL 31084 / PH-1) (Wheat head blight fungus).